Here is a 433-residue protein sequence, read N- to C-terminus: MQVSVETTQGLERRVTVTVPADTIDSEVKRLLKEEYRHRRVNGFRKGKIPPNVLQKLFGREARSRAASSIMQSKYFEAVMQEKLNPAGAPAIEPKVNEPGKDLEFTATFEVYPEVEVQNLDKVKVEKPAVEVTEKDVDNMLETLQKQHADWKEVKRKSKKGDRVTMDFVGSIDGEEFEGGKADDFALELGEGRMIPGFEDQIKGIKAGEEKTIEVTFPEDYHAENLKGKEAQFVVTAKKVEARDLPELNDEFVALFGVKEGGVEALKEEVRKNMERELKNAVKAKVKEQVLKGIVENNDVELPKSMIDQEIDQLRKQAAQRFGGNVEQMPDLPAELFEEQAKERVKVGLLLGEVIRGNELKADDEKVDEIIATAASAYEDPQEVVEYYKSNNDMMQQVRNLALEEQAIEFVLEKASVKDKKASFDDIMNPKQQ.

The region spanning 161-246 (GDRVTMDFVG…AKKVEARDLP (86 aa)) is the PPIase FKBP-type domain.

The protein belongs to the FKBP-type PPIase family. Tig subfamily.

It is found in the cytoplasm. It catalyses the reaction [protein]-peptidylproline (omega=180) = [protein]-peptidylproline (omega=0). In terms of biological role, involved in protein export. Acts as a chaperone by maintaining the newly synthesized protein in an open conformation. Functions as a peptidyl-prolyl cis-trans isomerase. In Idiomarina loihiensis (strain ATCC BAA-735 / DSM 15497 / L2-TR), this protein is Trigger factor.